A 238-amino-acid chain; its full sequence is Endonuclease III homolog (238 aa).

In terms of domain architecture, HhH spans 129 to 155 (REKGLPREMKDLISLPGIGNKMALLYM). The active-site Nucleophile; for N-glycosylase activity is Lys149. Residues Cys217, Cys224, Cys227, and Cys233 each coordinate [4Fe-4S] cluster.

Belongs to the Nth/MutY family. It depends on [4Fe-4S] cluster as a cofactor.

It localises to the nucleus. Its subcellular location is the mitochondrion. The enzyme catalyses 2'-deoxyribonucleotide-(2'-deoxyribose 5'-phosphate)-2'-deoxyribonucleotide-DNA = a 3'-end 2'-deoxyribonucleotide-(2,3-dehydro-2,3-deoxyribose 5'-phosphate)-DNA + a 5'-end 5'-phospho-2'-deoxyribonucleoside-DNA + H(+). In terms of biological role, bifunctional DNA N-glycosylase with associated apurinic/apyrimidinic (AP) lyase function that catalyzes the first step in base excision repair (BER), the primary repair pathway for the repair of oxidative DNA damage. The DNA N-glycosylase activity releases the damaged DNA base from DNA by cleaving the N-glycosidic bond, leaving an AP site. The AP lyase activity cleaves the phosphodiester bond 3' to the AP site by a beta-elimination. Primarily recognizes and repairs oxidative base damage of pyrimidines. The polypeptide is Endonuclease III homolog (Encephalitozoon cuniculi (strain GB-M1) (Microsporidian parasite)).